Consider the following 152-residue polypeptide: MNPAHLLVLSAVCVSLLGASSIPPQPLNLLQFNYMIQCTIPGSRPFLDYMDYGCYCGTGVAGHPVDELDRCCQTHDLCYSKAEEQPKCSSLLNSPLMKKYSYTCSGGTLTCNDDNDECGAFICNCDRAARICFAGAPYNKENKELDIATRCQ.

The first 21 residues, 1–21, serve as a signal peptide directing secretion; sequence MNPAHLLVLSAVCVSLLGASS. The propeptide occupies 22–27; sequence IPPQPL. Disulfide bonds link C38–C104, C54–C151, C56–C72, C71–C132, C78–C125, C88–C118, and C111–C123. The Ca(2+) site is built by Y55, G57, and G59. H75 is a catalytic residue. A Ca(2+)-binding site is contributed by D76. D126 is an active-site residue.

Belongs to the phospholipase A2 family. Group I subfamily. D49 sub-subfamily. It depends on Ca(2+) as a cofactor. As to expression, expressed by the venom gland.

It is found in the secreted. The enzyme catalyses a 1,2-diacyl-sn-glycero-3-phosphocholine + H2O = a 1-acyl-sn-glycero-3-phosphocholine + a fatty acid + H(+). In terms of biological role, PLA2 catalyzes the calcium-dependent hydrolysis of the 2-acyl groups in 3-sn-phosphoglycerides. In Ophiophagus hannah (King cobra), this protein is Acidic phospholipase A2.